Reading from the N-terminus, the 228-residue chain is Glutamate transport system permease protein GluC (228 aa).

The next 5 helical transmembrane spans lie at 16–36 (FWVT…FGTI), 64–84 (LTLV…LTLA), 100–120 (AVLG…RSGI), 145–165 (IIFP…LIAL), and 195–215 (LFVV…PMGL). Residues 16-217 (FWVTIKLTIY…ILTLPMGLGL (202 aa)) form the ABC transmembrane type-1 domain.

This sequence belongs to the binding-protein-dependent transport system permease family. HisMQ subfamily. In terms of assembly, the complex is composed of two ATP-binding proteins (GluA), two transmembrane proteins (GluC and GluD) and a solute-binding protein (GluB).

It localises to the cell membrane. In terms of biological role, part of the ABC transporter complex GluABCD involved in glutamate uptake. Probably responsible for the translocation of the substrate across the membrane. In Corynebacterium glutamicum (strain ATCC 13032 / DSM 20300 / JCM 1318 / BCRC 11384 / CCUG 27702 / LMG 3730 / NBRC 12168 / NCIMB 10025 / NRRL B-2784 / 534), this protein is Glutamate transport system permease protein GluC.